Consider the following 154-residue polypeptide: 6,7-dimethyl-8-ribityllumazine synthase (154 aa).

5-amino-6-(D-ribitylamino)uracil-binding positions include F22, 56 to 58 (AFE), and 80 to 82 (AVI). 85–86 (AT) is a (2S)-2-hydroxy-3-oxobutyl phosphate binding site. Residue H88 is the Proton donor of the active site. 5-amino-6-(D-ribitylamino)uracil is bound at residue F113. Residue R127 participates in (2S)-2-hydroxy-3-oxobutyl phosphate binding.

It belongs to the DMRL synthase family. As to quaternary structure, forms an icosahedral capsid composed of 60 subunits, arranged as a dodecamer of pentamers.

It carries out the reaction (2S)-2-hydroxy-3-oxobutyl phosphate + 5-amino-6-(D-ribitylamino)uracil = 6,7-dimethyl-8-(1-D-ribityl)lumazine + phosphate + 2 H2O + H(+). It functions in the pathway cofactor biosynthesis; riboflavin biosynthesis; riboflavin from 2-hydroxy-3-oxobutyl phosphate and 5-amino-6-(D-ribitylamino)uracil: step 1/2. Catalyzes the formation of 6,7-dimethyl-8-ribityllumazine by condensation of 5-amino-6-(D-ribitylamino)uracil with 3,4-dihydroxy-2-butanone 4-phosphate. This is the penultimate step in the biosynthesis of riboflavin. The chain is 6,7-dimethyl-8-ribityllumazine synthase from Geobacillus kaustophilus (strain HTA426).